Consider the following 386-residue polypeptide: MAVPPSAPQPRASFHLRRHTPCPQCSWGMEEKAAASASCREPPGPPRAAAVAYFGISVDPDDILPGALRLIQELRPHWKPEQVRTKRFTDGITNKLVACYVEEDMQDCVLVRVYGERTELLVDRENEVRNFQLLRAHSCAPKLYCTFQNGLCYEYMQGVALEPEHIREPRLFRLIALEMAKIHTIHANGSLPKPILWHKMHNYFTLVKNEINPSLSADVPKVEVLERELAWLKEHLSQLESPVVFCHNDLLCKNIIYDSIKGHVRFIDYEYAGYNYQAFDIGNHFNEFAGVNEVDYCLYPARETQLQWLHYYLQAQKGMAVTPREVQRLYVQVNKFALASHFFWALWALIQNQYSTIDFDFLRYAVIRFNQYFKVKPQASALEMPK.

This sequence belongs to the choline/ethanolamine kinase family. In terms of tissue distribution, expressed in kidney, liver, ovary, testis and prostate.

It carries out the reaction ethanolamine + ATP = phosphoethanolamine + ADP + H(+). Its pathway is phospholipid metabolism; phosphatidylethanolamine biosynthesis; phosphatidylethanolamine from ethanolamine: step 1/3. Functionally, highly specific for ethanolamine phosphorylation. Does not have choline kinase activity. In Homo sapiens (Human), this protein is Ethanolamine kinase 2 (ETNK2).